The chain runs to 203 residues: Peptide deformylase (203 aa).

Fe cation-binding residues include Cys-121 and His-163. Glu-164 is an active-site residue. Residue His-167 participates in Fe cation binding.

This sequence belongs to the polypeptide deformylase family. Requires Fe(2+) as cofactor.

It carries out the reaction N-terminal N-formyl-L-methionyl-[peptide] + H2O = N-terminal L-methionyl-[peptide] + formate. Functionally, removes the formyl group from the N-terminal Met of newly synthesized proteins. Requires at least a dipeptide for an efficient rate of reaction. N-terminal L-methionine is a prerequisite for activity but the enzyme has broad specificity at other positions. This chain is Peptide deformylase, found in Prochlorococcus marinus (strain MIT 9515).